A 98-amino-acid chain; its full sequence is Histone H4-like protein type G (98 aa).

Residues 17–21 mediate DNA binding; the sequence is KCHRK.

It belongs to the histone H4 family. As to quaternary structure, the nucleosome is a histone octamer containing two molecules each of H2A, H2B, H3 and H4 assembled in one H3-H4 heterotetramer and two H2A-H2B heterodimers. The octamer wraps approximately 147 bp of DNA.

The protein localises to the nucleus. The protein resides in the chromosome. In terms of biological role, core component of nucleosome. Nucleosomes wrap and compact DNA into chromatin, limiting DNA accessibility to the cellular machineries which require DNA as a template. Histones thereby play a central role in transcription regulation, DNA repair, DNA replication and chromosomal stability. DNA accessibility is regulated via a complex set of post-translational modifications of histones, also called histone code, and nucleosome remodeling. The sequence is that of Histone H4-like protein type G from Homo sapiens (Human).